The following is a 163-amino-acid chain: Probable cobalt-precorrin-6B C(15)-methyltransferase (decarboxylating) (163 aa).

Residues threonine 6, 30–34, aspartate 51, and glycine 75 contribute to the S-adenosyl-L-methionine site; that span reads GCGSG.

This sequence belongs to the methyltransferase superfamily. Archaeal-type CbiT family.

The catalysed reaction is Co-precorrin-6B + S-adenosyl-L-methionine = Co-precorrin-7 + S-adenosyl-L-homocysteine + CO2. It functions in the pathway cofactor biosynthesis; adenosylcobalamin biosynthesis; cob(II)yrinate a,c-diamide from sirohydrochlorin (anaerobic route): step 8/10. In terms of biological role, catalyzes the methylation of C-15 in cobalt-precorrin-6B followed by the decarboxylation of C-12 to form cobalt-precorrin-7. In Archaeoglobus fulgidus (strain ATCC 49558 / DSM 4304 / JCM 9628 / NBRC 100126 / VC-16), this protein is Probable cobalt-precorrin-6B C(15)-methyltransferase (decarboxylating).